The sequence spans 450 residues: Paired box protein Pax-8 (450 aa).

The paired DNA-binding region spans 9-135; that stretch reads GHGGLNQLGG…SSINRIIRTK (127 aa). Residues 12–68 form a PAI subdomain region; the sequence is GLNQLGGAFVNGRPLPEVVRQRIVDLAHQGVRPCDISRQLRVSHGCVSKILGRYYET. The segment at 87–135 is RED subdomain; the sequence is KVVEKIGDYKRQNPTMFAWEIRDRLLAEGVCDNDTVPSVSSINRIIRTK. The segment covering 159–182 has biased composition (polar residues); sequence LIPSSAVTPPESPQSDSLGSTYSI. Residues 159 to 222 form a disordered region; it reads LIPSSAVTPP…QSSSSGPRKH (64 aa). A Phosphoserine modification is found at S303.

Interacts with WWTR1. Expressed in the excretory system, thyroid gland and Wilms tumors.

It is found in the nucleus. Its function is as follows. Transcription factor for the thyroid-specific expression of the genes exclusively expressed in the thyroid cell type, maintaining the functional differentiation of such cells. The sequence is that of Paired box protein Pax-8 (PAX8) from Homo sapiens (Human).